A 46-amino-acid polypeptide reads, in one-letter code: Diuretic hormone (46 aa).

Ile-46 carries the isoleucine amide modification.

This sequence belongs to the sauvagine/corticotropin-releasing factor/urotensin I family.

Its subcellular location is the secreted. Functionally, regulation of fluid secretion. Stimulates primary urine secretion by Malpighian tubules and causes a dose-dependent stimulation of cAMP levels in the tubules. In Acheta domesticus (House cricket), this protein is Diuretic hormone.